Consider the following 363-residue polypeptide: MSEHAGEIRVAIVGVGNCASSLVQGVQYYRNADENTTVPGLMHVKFGPYHVRDVNFVAAFDVDAKKVGFDLSEAIFASENNTIKIADVPPTDVIVQRGPTLDGIGKYYADTIEVSDAEPVDVVKVLKEAEVDVLVSYLPVGSEEADKFYAQCAIDAGVAFVNALPVFIASDPVWAKKFEDAGVPIVGDDIKSQVGATITHRVMAKLFEDRGVTLDRTYQLNVGGNMDFLNMLERSRLESKKVSKTQAVTSNLSGALAGKVEDKNVHIGPSDHVAWLDDRKWAYVRLEGRAFGDVPLNLEYKLEVWDSPNSAGVIIDAVRAAKIAKDRGIGGPIEAASAYLMKSPPKQLADDVARAELETFIEG.

Lys65 is covalently cross-linked (Isoglutamyl lysine isopeptide (Lys-Gln) (interchain with Q-Cter in protein Pup)). Asp70, Ala129, Tyr149, Ser192, Asp227, and Lys240 together coordinate NAD(+).

The protein belongs to the myo-inositol 1-phosphate synthase family. The cofactor is NAD(+). Post-translationally, pupylated at Lys-65 by the prokaryotic ubiquitin-like protein Pup, which leads to its degradation by the proteasome.

The enzyme catalyses D-glucose 6-phosphate = 1D-myo-inositol 3-phosphate. In terms of biological role, key enzyme in myo-inositol biosynthesis pathway that catalyzes the conversion of glucose 6-phosphate to 1D-myo-inositol 3-phosphate in a NAD-dependent manner. The chain is Inositol-3-phosphate synthase (ino1) from Mycolicibacterium smegmatis (strain ATCC 700084 / mc(2)155) (Mycobacterium smegmatis).